The sequence spans 402 residues: Candidapepsin-1 (402 aa).

The segment at residues 1-25 is a signal peptide (or 18, or 21); sequence MVAIVTLTRQVLLTIALALFAQGAA. Residues 26–62 constitute a propeptide, activation peptide; sequence IPEEAAKRDDNPGFVALDFDVLRKPLNLTEALLREKR. The N-linked (GlcNAc...) asparagine glycan is linked to asparagine 52. Residues 76 to 389 form the Peptidase A1 domain; the sequence is YASKVSVGSN…NLDANTISIA (314 aa). Aspartate 94 is a catalytic residue. A disulfide bond links cysteine 109 and cysteine 115. The active site involves aspartate 282. The cysteines at positions 320 and 354 are disulfide-linked.

Belongs to the peptidase A1 family. In terms of processing, O-glycosylated.

It localises to the secreted. It carries out the reaction Preferential cleavage at the carboxyl of hydrophobic amino acids, but fails to cleave 15-Leu-|-Tyr-16, 16-Tyr-|-Leu-17 and 24-Phe-|-Phe-25 of insulin B chain. Activates trypsinogen, and degrades keratin.. The sequence is that of Candidapepsin-1 (SAPP1) from Candida parapsilosis (Yeast).